The chain runs to 164 residues: Transcription antitermination protein NusB (164 aa).

Belongs to the NusB family.

Involved in transcription antitermination. Required for transcription of ribosomal RNA (rRNA) genes. Binds specifically to the boxA antiterminator sequence of the ribosomal RNA (rrn) operons. The sequence is that of Transcription antitermination protein NusB from Desulfovibrio desulfuricans (strain ATCC 27774 / DSM 6949 / MB).